The chain runs to 684 residues: Threonine--tRNA ligase (684 aa).

Residues 1–66 form the TGS domain; the sequence is MTAVASSAPA…DTDVEVTPVA (66 aa). The interval 261 to 567 is catalytic; it reads DHRKLGVELD…LTEHYAGAFP (307 aa). Residues C366, H417, and H544 each contribute to the Zn(2+) site.

Belongs to the class-II aminoacyl-tRNA synthetase family. Homodimer. It depends on Zn(2+) as a cofactor.

It localises to the cytoplasm. It catalyses the reaction tRNA(Thr) + L-threonine + ATP = L-threonyl-tRNA(Thr) + AMP + diphosphate + H(+). Its function is as follows. Catalyzes the attachment of threonine to tRNA(Thr) in a two-step reaction: L-threonine is first activated by ATP to form Thr-AMP and then transferred to the acceptor end of tRNA(Thr). Also edits incorrectly charged L-seryl-tRNA(Thr). This Mycolicibacterium smegmatis (strain ATCC 700084 / mc(2)155) (Mycobacterium smegmatis) protein is Threonine--tRNA ligase.